The following is a 333-amino-acid chain: Tetraacyldisaccharide 4'-kinase (333 aa).

Residue 57-64 (IVGGAGKT) participates in ATP binding.

The protein belongs to the LpxK family.

The enzyme catalyses a lipid A disaccharide + ATP = a lipid IVA + ADP + H(+). Its pathway is glycolipid biosynthesis; lipid IV(A) biosynthesis; lipid IV(A) from (3R)-3-hydroxytetradecanoyl-[acyl-carrier-protein] and UDP-N-acetyl-alpha-D-glucosamine: step 6/6. Transfers the gamma-phosphate of ATP to the 4'-position of a tetraacyldisaccharide 1-phosphate intermediate (termed DS-1-P) to form tetraacyldisaccharide 1,4'-bis-phosphate (lipid IVA). The protein is Tetraacyldisaccharide 4'-kinase of Dechloromonas aromatica (strain RCB).